An 812-amino-acid chain; its full sequence is MIEIVHSLPTPHDAVRAAADGAGRLIPPLWPLASSVAVNPFLGHTGEPLWAAGARLGRASGAAVTMPRSWYRDRIAAGSITDEDLLDALADAPADLRPADLGALRGAAALDPEPVRPLPTVASLCAEASGIDWPGLIADRLGAWAAGHFDEGQALWAAPSGGSTLALWRAWAIHDLTPEIAGLGGFARHVSEVPDGALPALARAVCGLGLSPGALESYFHQILLSLGGWAQYARYKLWQAELAGGTDGTLRDLLAVRVIWDEALLTRYGERIAESWAAVAAAHASPARPTRDLVIDSILQDAAERAAQRALAATLAATLAGGSPGVGESRPALQAAFCIDVRSEVFRRALESLDPGIRTLGFAGFFGLATAHRRFASDIAERRLPVLLNPGLRTCAGGPALSDADHASRLAARARRAWGRFRQAAVSSFAFVEAAGPLYAAKLLGDSLHLGGPATPHDPMPRLDPPRDLASRVATADAVLRAMSLTSTFAPIVLLVGHGANVVNNPHASALHCGACGGYSGEVNARLLAQLLNDADVRAGLRERGLEVPADTVFLAGLHDTTTDEVTLYAGDLPGGSPLQGLEPVRVWLAQAGKLARAERALRLPRARDNASVVRRSRDWAETRPEWGLAGCNAFIAAPRHRTAGQPLHGRAFLHDYDWQRDEGFGVLELIVTAPVVVASWISLQYYGSTVAPELFGSGNKLLHNVVGGIGVLEGNGGPLRAGLPRQSVHDGEHHAHEPLRLSVLIEAPRQAITDVLERHREVRALFDNRWLHLFALDQDGRMAWRYAGDLRWTSTAASDGAVPGLPLRAAV.

Zn(2+)-binding residues include cysteine 338, aspartate 340, histidine 498, and cysteine 513.

The protein belongs to the inorganic carbon transporter (TC 9.A.2) DabA family. As to quaternary structure, forms a complex with DabB. The cofactor is Zn(2+).

The protein resides in the cell inner membrane. Part of an energy-coupled inorganic carbon pump. The polypeptide is Probable inorganic carbon transporter subunit DabA (Methylobacterium sp. (strain 4-46)).